A 114-amino-acid chain; its full sequence is Large ribosomal subunit protein bL19 (114 aa).

It belongs to the bacterial ribosomal protein bL19 family.

In terms of biological role, this protein is located at the 30S-50S ribosomal subunit interface and may play a role in the structure and function of the aminoacyl-tRNA binding site. The protein is Large ribosomal subunit protein bL19 of Bacillus cereus (strain AH187).